The sequence spans 1058 residues: SIT4-associating protein SAP185 (1058 aa).

Residue Lys-20 forms a Glycyl lysine isopeptide (Lys-Gly) (interchain with G-Cter in ubiquitin) linkage. Disordered regions lie at residues 34–71 (TSTEAGKIDSNSTDESLESNSFKSEDEEEEYELPNREE), 135–202 (SEDR…ELEE), 513–556 (NSQN…TSID), 818–862 (CQEE…DQEQ), 873–892 (TKTRLNFNPDSDATEQVPGE), and 934–992 (ELSD…HDYD). Residues 42–55 (DSNSTDESLESNSF) are compositionally biased toward polar residues. 2 stretches are compositionally biased toward basic and acidic residues: residues 135–146 (SEDRDLVRGEDK) and 153–175 (ENAKADKKNIDGTFEEKERTRSG). The segment covering 176–189 (EEEELENEENDSAS) has biased composition (acidic residues). Residues 190 to 202 (EDTRVTLPHELEE) show a composition bias toward basic and acidic residues. 2 stretches are compositionally biased toward acidic residues: residues 528–546 (ENEDDNTGDADDEVEDDTN) and 820–837 (EEEEDEGEGYVSFDEDEP). Positions 838-861 (QEYRNGDSVRSKESNSSEGKRDQE) are enriched in basic and acidic residues. Over residues 934-963 (ELSDGWESSPSNSIPKRASPSKNGMNSPMF) the composition is skewed to polar residues. Basic and acidic residues predominate over residues 967-991 (FELHSPTDEFGGHKDEILSAEGHDY).

Belongs to the SAPS family. Post-translationally, hyperphosphorylated in the absence of SIT4.

Associates with the SIT4 phosphatase in a cell cycle dependent manner. May be directly or indirectly involved in SIT4-dependent functions in budding and in normal G1 cyclin expression. The sequence is that of SIT4-associating protein SAP185 (SAP185) from Saccharomyces cerevisiae (strain ATCC 204508 / S288c) (Baker's yeast).